The primary structure comprises 150 residues: MSKRKTKEPKVDVVTLGPSVREGEQVFGVVHIFASFNDTFIHVTDLSGRETLVRITGGMKVKADRDESSPYAAMLAAQDVAQRCKELGITAMHVKLRATGGNKTKTPGPGAQSALRALARSGMKIGRIEDVTPIPTDSTRRKGGRRGRRL.

S19 is modified (phosphoserine).

This sequence belongs to the universal ribosomal protein uS11 family. As to quaternary structure, interacts with AAK6.

It localises to the cytoplasm. This chain is Small ribosomal subunit protein uS11z (RPS14A), found in Arabidopsis thaliana (Mouse-ear cress).